The primary structure comprises 209 residues: MTKGILGRKVGMTQIFTKNGILVPVTVIEATPNVVLQVKTNESDGYEAVQVGYQDMREVLSNKPAKGHAAKAKTSPKRFIREIRDVELKDYEVGSEITVDSFSEGDVVDVTGTTRGHGTQGNIKRWGQSRGPETHGSRYHRIPGSMGSIINRVPKGKKLPGHMGGKKVTVQNLVIEKVVPEKNVLLIKGNVPGAKNSLIFVKSAAKAAK.

Positions 112-122 are enriched in polar residues; the sequence is GTTRGHGTQGN. The segment at 112–146 is disordered; the sequence is GTTRGHGTQGNIKRWGQSRGPETHGSRYHRIPGSM.

This sequence belongs to the universal ribosomal protein uL3 family. As to quaternary structure, part of the 50S ribosomal subunit. Forms a cluster with proteins L14 and L19.

Functionally, one of the primary rRNA binding proteins, it binds directly near the 3'-end of the 23S rRNA, where it nucleates assembly of the 50S subunit. The sequence is that of Large ribosomal subunit protein uL3 from Lactobacillus johnsonii (strain CNCM I-12250 / La1 / NCC 533).